Consider the following 238-residue polypeptide: Ribonuclease PH (238 aa).

Residues R86 and G124–R126 contribute to the phosphate site.

Belongs to the RNase PH family. In terms of assembly, homohexameric ring arranged as a trimer of dimers.

The enzyme catalyses tRNA(n+1) + phosphate = tRNA(n) + a ribonucleoside 5'-diphosphate. In terms of biological role, phosphorolytic 3'-5' exoribonuclease that plays an important role in tRNA 3'-end maturation. Removes nucleotide residues following the 3'-CCA terminus of tRNAs; can also add nucleotides to the ends of RNA molecules by using nucleoside diphosphates as substrates, but this may not be physiologically important. Probably plays a role in initiation of 16S rRNA degradation (leading to ribosome degradation) during starvation. The protein is Ribonuclease PH of Phenylobacterium zucineum (strain HLK1).